Here is a 157-residue protein sequence, read N- to C-terminus: Crossover junction endodeoxyribonuclease RuvC (157 aa).

Catalysis depends on residues Asp-7, Glu-67, and Asp-140. The Mg(2+) site is built by Asp-7, Glu-67, and Asp-140.

Belongs to the RuvC family. Homodimer which binds Holliday junction (HJ) DNA. The HJ becomes 2-fold symmetrical on binding to RuvC with unstacked arms; it has a different conformation from HJ DNA in complex with RuvA. In the full resolvosome a probable DNA-RuvA(4)-RuvB(12)-RuvC(2) complex forms which resolves the HJ. Requires Mg(2+) as cofactor.

It localises to the cytoplasm. It carries out the reaction Endonucleolytic cleavage at a junction such as a reciprocal single-stranded crossover between two homologous DNA duplexes (Holliday junction).. Its function is as follows. The RuvA-RuvB-RuvC complex processes Holliday junction (HJ) DNA during genetic recombination and DNA repair. Endonuclease that resolves HJ intermediates. Cleaves cruciform DNA by making single-stranded nicks across the HJ at symmetrical positions within the homologous arms, yielding a 5'-phosphate and a 3'-hydroxyl group; requires a central core of homology in the junction. The consensus cleavage sequence is 5'-(A/T)TT(C/G)-3'. Cleavage occurs on the 3'-side of the TT dinucleotide at the point of strand exchange. HJ branch migration catalyzed by RuvA-RuvB allows RuvC to scan DNA until it finds its consensus sequence, where it cleaves and resolves the cruciform DNA. The sequence is that of Crossover junction endodeoxyribonuclease RuvC from Rickettsia bellii (strain OSU 85-389).